Here is a 468-residue protein sequence, read N- to C-terminus: Glutamate--tRNA ligase 2 (468 aa).

The short motif at 9–19 is the 'HIGH' region element; it reads PSPTGFLHIGG. The 'KMSKS' region signature appears at 238–242; the sequence is KLSKR. Lys-241 lines the ATP pocket.

The protein belongs to the class-I aminoacyl-tRNA synthetase family. Glutamate--tRNA ligase type 1 subfamily. As to quaternary structure, monomer.

The protein localises to the cytoplasm. It catalyses the reaction tRNA(Glu) + L-glutamate + ATP = L-glutamyl-tRNA(Glu) + AMP + diphosphate. Its function is as follows. Catalyzes the attachment of glutamate to tRNA(Glu) in a two-step reaction: glutamate is first activated by ATP to form Glu-AMP and then transferred to the acceptor end of tRNA(Glu). The chain is Glutamate--tRNA ligase 2 from Rhodospirillum rubrum (strain ATCC 11170 / ATH 1.1.1 / DSM 467 / LMG 4362 / NCIMB 8255 / S1).